The chain runs to 84 residues: Small ribosomal subunit protein uS17 (84 aa).

The protein belongs to the universal ribosomal protein uS17 family. As to quaternary structure, part of the 30S ribosomal subunit.

Its function is as follows. One of the primary rRNA binding proteins, it binds specifically to the 5'-end of 16S ribosomal RNA. This is Small ribosomal subunit protein uS17 from Erwinia tasmaniensis (strain DSM 17950 / CFBP 7177 / CIP 109463 / NCPPB 4357 / Et1/99).